The sequence spans 313 residues: MAINLTGRSLLTLLEYTPEEISFLLDLSAQVKRESRARIVHKRFAGKTLAMIFEKRSTRTRMAFETAFAEEGGHPIFLSIQDIQLGAKESIEDTARVLGRMVDAIMFRGYKQETVETLAKYSGVPVYNGLTDVYHPTQVLADLMTTQEVFGKLKGIKLVFMGDGRNNMANSLMIGCAKMGMHYVVCSPAELRPDENLMQTCLTIAKETDSKIEVIDDPEKAVDGADVIYTDVWASMGEESKQQERERLLRPYQVNEVLMRKTGKKDTIFLHCLPAVKGQEVTFDVIEGKQSRVWDEAENRKHTIKALMIATLL.

Carbamoyl phosphate-binding positions include 57–60 (STRT), Gln-84, Arg-108, and 135–138 (HPTQ). L-ornithine is bound by residues Asn-167, Asp-231, and 235–236 (SM). Residues 272–273 (CL) and Arg-300 each bind carbamoyl phosphate.

Belongs to the aspartate/ornithine carbamoyltransferase superfamily. OTCase family.

It localises to the cytoplasm. It carries out the reaction carbamoyl phosphate + L-ornithine = L-citrulline + phosphate + H(+). It participates in amino-acid biosynthesis; L-arginine biosynthesis; L-arginine from L-ornithine and carbamoyl phosphate: step 1/3. Reversibly catalyzes the transfer of the carbamoyl group from carbamoyl phosphate (CP) to the N(epsilon) atom of ornithine (ORN) to produce L-citrulline. In Pseudothermotoga lettingae (strain ATCC BAA-301 / DSM 14385 / NBRC 107922 / TMO) (Thermotoga lettingae), this protein is Ornithine carbamoyltransferase.